The chain runs to 368 residues: RNA polymerase sigma factor SigA (368 aa).

The segment at 69-90 (LVNEKDSSDTDEKLNPSDLSAP) is disordered. Basic and acidic residues predominate over residues 71–83 (NEKDSSDTDEKLN). Positions 135 to 205 (LAEANLRLVV…TRAIADQART (71 aa)) are sigma-70 factor domain-2. An Interaction with polymerase core subunit RpoC motif is present at residues 159-162 (DLIQ). Positions 214–290 (ETINKLIRVQ…DQEAQSPSDH (77 aa)) are sigma-70 factor domain-3. Positions 303–356 (VLDTLTDREENVLRLRFGLDDGRTRTLEEVGKVFGVTRERIRQIEAKALRKLRH) are sigma-70 factor domain-4. A DNA-binding region (H-T-H motif) is located at residues 329–348 (LEEVGKVFGVTRERIRQIEA).

This sequence belongs to the sigma-70 factor family. RpoD/SigA subfamily. Interacts transiently with the RNA polymerase catalytic core.

The protein resides in the cytoplasm. Functionally, sigma factors are initiation factors that promote the attachment of RNA polymerase to specific initiation sites and are then released. This sigma factor is the primary sigma factor during exponential growth. In Staphylococcus aureus (strain N315), this protein is RNA polymerase sigma factor SigA.